The chain runs to 280 residues: Bifunctional protein FolD (280 aa).

Residues 166–168 and S191 contribute to the NADP(+) site; that span reads GRS.

Belongs to the tetrahydrofolate dehydrogenase/cyclohydrolase family. As to quaternary structure, homodimer.

The catalysed reaction is (6R)-5,10-methylene-5,6,7,8-tetrahydrofolate + NADP(+) = (6R)-5,10-methenyltetrahydrofolate + NADPH. It carries out the reaction (6R)-5,10-methenyltetrahydrofolate + H2O = (6R)-10-formyltetrahydrofolate + H(+). It functions in the pathway one-carbon metabolism; tetrahydrofolate interconversion. Catalyzes the oxidation of 5,10-methylenetetrahydrofolate to 5,10-methenyltetrahydrofolate and then the hydrolysis of 5,10-methenyltetrahydrofolate to 10-formyltetrahydrofolate. This chain is Bifunctional protein FolD, found in Teredinibacter turnerae (strain ATCC 39867 / T7901).